We begin with the raw amino-acid sequence, 325 residues long: uncharacterized protein (325 aa).

Residues proline 108–threonine 141 are disordered.

This is an uncharacterized protein from Homo sapiens (Human).